Reading from the N-terminus, the 132-residue chain is Ribosome-binding factor A (132 aa).

The protein belongs to the RbfA family. Monomer. Binds 30S ribosomal subunits, but not 50S ribosomal subunits or 70S ribosomes.

The protein localises to the cytoplasm. In terms of biological role, one of several proteins that assist in the late maturation steps of the functional core of the 30S ribosomal subunit. Associates with free 30S ribosomal subunits (but not with 30S subunits that are part of 70S ribosomes or polysomes). Required for efficient processing of 16S rRNA. May interact with the 5'-terminal helix region of 16S rRNA. This is Ribosome-binding factor A from Pectobacterium carotovorum subsp. carotovorum (strain PC1).